The chain runs to 819 residues: Outer membrane usher protein CssD (819 aa).

This sequence belongs to the fimbrial export usher family.

Its subcellular location is the cell outer membrane. In terms of biological role, involved in the export and assembly of C6 fimbrial subunits across the outer membrane. The chain is Outer membrane usher protein CssD (cssD) from Escherichia coli.